Here is a 72-residue protein sequence, read N- to C-terminus: DNA-directed RNA polymerase subunit Rpo10 (72 aa).

Residues Cys-7, Cys-10, Cys-54, and Cys-55 each contribute to the Zn(2+) site.

Belongs to the archaeal Rpo10/eukaryotic RPB10 RNA polymerase subunit family. Part of the RNA polymerase complex. Requires Zn(2+) as cofactor.

The protein localises to the cytoplasm. It carries out the reaction RNA(n) + a ribonucleoside 5'-triphosphate = RNA(n+1) + diphosphate. DNA-dependent RNA polymerase (RNAP) catalyzes the transcription of DNA into RNA using the four ribonucleoside triphosphates as substrates. This chain is DNA-directed RNA polymerase subunit Rpo10, found in Picrophilus torridus (strain ATCC 700027 / DSM 9790 / JCM 10055 / NBRC 100828 / KAW 2/3).